Here is a 903-residue protein sequence, read N- to C-terminus: DNA-directed DNA polymerase (903 aa).

A 3'-5'exonuclease region spans residues 103–340 (YDHTKIRVAN…VLQIDAKRQF (238 aa)). Positions 114, 116, and 222 each coordinate Mg(2+). A beta hairpin region spans residues 248-264 (TRVKVIENMYGSREIIT). Residues D327, D411, and L412 each coordinate Mg(2+). The tract at residues 380–903 (IPQGRSHPVQ…KASLFDMFDF (524 aa)) is polymerase. Substrate contacts are provided by residues 414 to 416 (SLY), R482, and K560. A Mg(2+)-binding site is contributed by D623. A binding of DNA in B-conformation region spans residues 705-708 (KKRY). The segment at 897 to 903 (LFDMFDF) is interaction with the polymerase clamp.

The protein belongs to the DNA polymerase type-B family. Part of the replicase complex that includes the DNA polymerase, the polymerase clamp, the clamp loader complex, the single-stranded DNA binding protein, and the primase/helicase. Interacts with the polymerase clamp; this interaction constitutes the polymerase holoenzyme. The cofactor is Mg(2+).

It carries out the reaction DNA(n) + a 2'-deoxyribonucleoside 5'-triphosphate = DNA(n+1) + diphosphate. Functionally, replicates the viral genomic DNA. This polymerase possesses two enzymatic activities: DNA synthesis (polymerase) and an exonucleolytic activity that degrades single-stranded DNA in the 3'- to 5'-direction for proofreading purpose. The chain is DNA-directed DNA polymerase (43) from Escherichia coli (Bacteriophage RB69).